Reading from the N-terminus, the 926-residue chain is Probable zinc protease PqqL (926 aa).

Residue His-79 participates in Zn(2+) binding. Glu-82 acts as the Proton acceptor in catalysis. Residues His-83 and Glu-159 each contribute to the Zn(2+) site.

This sequence belongs to the peptidase M16 family. Zn(2+) serves as cofactor.

This chain is Probable zinc protease PqqL (pqqL), found in Haemophilus influenzae (strain ATCC 51907 / DSM 11121 / KW20 / Rd).